The chain runs to 486 residues: Cysteine--tRNA ligase (486 aa).

Residue C30 participates in Zn(2+) binding. Residues 32–42 carry the 'HIGH' region motif; sequence PTVYDRAHLGN. 3 residues coordinate Zn(2+): C221, H246, and E250. The short motif at 279–283 is the 'KMSKS' region element; sequence KMSKS. K282 lines the ATP pocket.

It belongs to the class-I aminoacyl-tRNA synthetase family. Monomer. The cofactor is Zn(2+).

It is found in the cytoplasm. It catalyses the reaction tRNA(Cys) + L-cysteine + ATP = L-cysteinyl-tRNA(Cys) + AMP + diphosphate. The sequence is that of Cysteine--tRNA ligase from Cereibacter sphaeroides (strain ATCC 17025 / ATH 2.4.3) (Rhodobacter sphaeroides).